The following is a 56-amino-acid chain: Large ribosomal subunit protein bL33A (56 aa).

This sequence belongs to the bacterial ribosomal protein bL33 family.

The protein is Large ribosomal subunit protein bL33A of Nocardia farcinica (strain IFM 10152).